A 310-amino-acid chain; its full sequence is Olfactory receptor 5H14 (310 aa).

The Extracellular portion of the chain corresponds to 1–28; sequence MEEENATLLTEFVLTGFLYQPQWKIPLF. N-linked (GlcNAc...) asparagine glycosylation is present at Asn5. Residues 29-49 form a helical membrane-spanning segment; sequence LAFLVIYLITIMGNLGLIAVI. At 50–56 the chain is on the cytoplasmic side; it reads WKDPHLH. Residues 57-77 form a helical membrane-spanning segment; it reads IPMYLLLGNLAFVDALLSSSV. The Extracellular portion of the chain corresponds to 78 to 98; the sequence is TLKMLINFLAKSKMISLSECK. Residues Cys97 and Cys179 are joined by a disulfide bond. A helical transmembrane segment spans residues 99–119; that stretch reads IQLFSFAISVTTECFLLATMA. Over 120–143 the chain is Cytoplasmic; that stretch reads YDRYVAICKPLLYPAIMTNGLCIR. Residues 144-164 form a helical membrane-spanning segment; it reads LLILSYVGGLLHALIHEGFLF. Residues 165-195 are Extracellular-facing; the sequence is RLTFCNSNIIQHFYCDIIPLLKISYTDSSIN. The helical transmembrane segment at 196 to 216 threads the bilayer; it reads FLMVFIFAGSIQVFTIGTVLI. Over 217 to 240 the chain is Cytoplasmic; that stretch reads SYIFVLYTILKKKSVKGMRKAFST. Residues 241–261 traverse the membrane as a helical segment; it reads CGAHLLSVSLYYGPLAFMYMG. The Extracellular segment spans residues 262-271; that stretch reads SASPQADDQD. The chain crosses the membrane as a helical span at residues 272–292; that stretch reads MMESLFYTVIVPLLNPMIYSL. The Cytoplasmic segment spans residues 293 to 310; the sequence is RNKQVIASFTKMFKRNDV.

Belongs to the G-protein coupled receptor 1 family.

The protein localises to the cell membrane. Functionally, odorant receptor. This is Olfactory receptor 5H14 (OR5H14) from Homo sapiens (Human).